Reading from the N-terminus, the 290-residue chain is Glutamate racemase (290 aa).

Substrate contacts are provided by residues 24-25 (DS) and 56-57 (YG). Cys-87 (proton donor/acceptor) is an active-site residue. 88–89 (NT) is a binding site for substrate. Catalysis depends on Cys-199, which acts as the Proton donor/acceptor. Residue 200–201 (TH) participates in substrate binding. The disordered stretch occupies residues 271–290 (GADGASLPDPPSPRIELTTT).

This sequence belongs to the aspartate/glutamate racemases family.

The enzyme catalyses L-glutamate = D-glutamate. The protein operates within cell wall biogenesis; peptidoglycan biosynthesis. Provides the (R)-glutamate required for cell wall biosynthesis. The protein is Glutamate racemase of Deinococcus radiodurans (strain ATCC 13939 / DSM 20539 / JCM 16871 / CCUG 27074 / LMG 4051 / NBRC 15346 / NCIMB 9279 / VKM B-1422 / R1).